Consider the following 360-residue polypeptide: Phosphoserine aminotransferase (360 aa).

Arginine 41 is a binding site for L-glutamate. Residues tryptophan 101, threonine 152, aspartate 172, and glutamine 195 each contribute to the pyridoxal 5'-phosphate site. Position 196 is an N6-(pyridoxal phosphate)lysine (lysine 196). Position 237–238 (237–238 (NT)) interacts with pyridoxal 5'-phosphate.

Belongs to the class-V pyridoxal-phosphate-dependent aminotransferase family. SerC subfamily. In terms of assembly, homodimer. Requires pyridoxal 5'-phosphate as cofactor.

Its subcellular location is the cytoplasm. It carries out the reaction O-phospho-L-serine + 2-oxoglutarate = 3-phosphooxypyruvate + L-glutamate. It catalyses the reaction 4-(phosphooxy)-L-threonine + 2-oxoglutarate = (R)-3-hydroxy-2-oxo-4-phosphooxybutanoate + L-glutamate. The protein operates within amino-acid biosynthesis; L-serine biosynthesis; L-serine from 3-phospho-D-glycerate: step 2/3. Its pathway is cofactor biosynthesis; pyridoxine 5'-phosphate biosynthesis; pyridoxine 5'-phosphate from D-erythrose 4-phosphate: step 3/5. Its function is as follows. Catalyzes the reversible conversion of 3-phosphohydroxypyruvate to phosphoserine and of 3-hydroxy-2-oxo-4-phosphonooxybutanoate to phosphohydroxythreonine. This Paraburkholderia phytofirmans (strain DSM 17436 / LMG 22146 / PsJN) (Burkholderia phytofirmans) protein is Phosphoserine aminotransferase.